Reading from the N-terminus, the 241-residue chain is Probable transcriptional regulatory protein lin1570 (241 aa).

Polar residues predominate over residues 1–14 (MAGHSKWNNIQGRK). The interval 1–22 (MAGHSKWNNIQGRKNAQDSKRS) is disordered.

The protein belongs to the TACO1 family.

It localises to the cytoplasm. This is Probable transcriptional regulatory protein lin1570 from Listeria innocua serovar 6a (strain ATCC BAA-680 / CLIP 11262).